Reading from the N-terminus, the 421-residue chain is UDP-N-acetylglucosamine 1-carboxyvinyltransferase (421 aa).

22–23 (KN) contributes to the phosphoenolpyruvate binding site. Position 93 (R93) interacts with UDP-N-acetyl-alpha-D-glucosamine. The active-site Proton donor is the C117. C117 carries the 2-(S-cysteinyl)pyruvic acid O-phosphothioketal modification. UDP-N-acetyl-alpha-D-glucosamine-binding positions include 122-126 (RPVDL), D308, and L330.

Belongs to the EPSP synthase family. MurA subfamily.

The protein localises to the cytoplasm. It catalyses the reaction phosphoenolpyruvate + UDP-N-acetyl-alpha-D-glucosamine = UDP-N-acetyl-3-O-(1-carboxyvinyl)-alpha-D-glucosamine + phosphate. Its pathway is cell wall biogenesis; peptidoglycan biosynthesis. In terms of biological role, cell wall formation. Adds enolpyruvyl to UDP-N-acetylglucosamine. The chain is UDP-N-acetylglucosamine 1-carboxyvinyltransferase from Helicobacter hepaticus (strain ATCC 51449 / 3B1).